We begin with the raw amino-acid sequence, 185 residues long: Peptidyl-tRNA hydrolase (185 aa).

A tRNA-binding site is contributed by tyrosine 14. Catalysis depends on histidine 19, which acts as the Proton acceptor. 3 residues coordinate tRNA: tyrosine 64, asparagine 66, and asparagine 112.

It belongs to the PTH family. In terms of assembly, monomer.

The protein localises to the cytoplasm. The catalysed reaction is an N-acyl-L-alpha-aminoacyl-tRNA + H2O = an N-acyl-L-amino acid + a tRNA + H(+). Its function is as follows. Hydrolyzes ribosome-free peptidyl-tRNAs (with 1 or more amino acids incorporated), which drop off the ribosome during protein synthesis, or as a result of ribosome stalling. Functionally, catalyzes the release of premature peptidyl moieties from peptidyl-tRNA molecules trapped in stalled 50S ribosomal subunits, and thus maintains levels of free tRNAs and 50S ribosomes. In Exiguobacterium sibiricum (strain DSM 17290 / CCUG 55495 / CIP 109462 / JCM 13490 / 255-15), this protein is Peptidyl-tRNA hydrolase.